Consider the following 299-residue polypeptide: MKTKLIVVAGPTAVGKTALGIELAERFNGEIISGDSQQVYRQLNIGTAKATPEEQAAAVHHLIDVRDVDESYSAYDFVTEAQAAITDIVSRGKLPIIVGGTGLYLQSLLEGYHLGGKVDQNQVLAYRSELEQLSDQQLFEKIDSSGIEIKEINRRRAIRALELYRFSDNLENTETCYEPFIIGLDDERSLIYDRINTRVDKMVELGLLEEAKWLYDNFPEAQSARGIGYKELFPYFSGEQTLDEALEKLKQNTRRFAKRQLTWFRNRMTVSFYQISSPEYPENVIQDLAIFLNEEEGEK.

Residue 10–17 participates in ATP binding; that stretch reads GPTAVGKT. 12 to 17 is a binding site for substrate; the sequence is TAVGKT. Residues 35-38 are interaction with substrate tRNA; it reads DSQQ.

Belongs to the IPP transferase family. As to quaternary structure, monomer. It depends on Mg(2+) as a cofactor.

It catalyses the reaction adenosine(37) in tRNA + dimethylallyl diphosphate = N(6)-dimethylallyladenosine(37) in tRNA + diphosphate. Catalyzes the transfer of a dimethylallyl group onto the adenine at position 37 in tRNAs that read codons beginning with uridine, leading to the formation of N6-(dimethylallyl)adenosine (i(6)A). In Streptococcus thermophilus (strain CNRZ 1066), this protein is tRNA dimethylallyltransferase.